A 1992-amino-acid polypeptide reads, in one-letter code: Fer-1-like protein 4 (1992 aa).

C2 domains lie at 1-97 (MALT…VLRE), 214-330 (PRGD…QKWA), and 369-502 (TSSD…AGFN). At 1–1952 (MALTVCVRHL…PLKTFIFFIW (1952 aa)) the chain is on the extracellular side. Disordered stretches follow at residues 554–606 (RVEP…APEI), 661–686 (AGRQ…LEVQ), and 691–710 (SEDR…PAQW). The segment covering 559–569 (PSQTTQRSGLS) has biased composition (polar residues). Residues 572-581 (TGKKKKKKEK) show a composition bias toward basic residues. C2 domains lie at 951 to 1078 (PSSG…ELQF) and 1126 to 1250 (ISGH…PQEE). Disordered regions lie at residues 1245-1276 (EDPQ…EAGT) and 1322-1361 (FQGQ…SKVS). Acidic residues-rich tracts occupy residues 1247 to 1257 (PQEEEETEEET) and 1328 to 1337 (SDDEMDEAGD). C2 domains lie at 1430–1549 (SFSE…ANCG) and 1675–1824 (VPAP…EHCS). Residues Asp-1464, Asp-1470, Asp-1519, Asp-1521, Asp-1527, Asp-1795, Ser-1798, and Asp-1801 each contribute to the Ca(2+) site. Residues 1862–1885 (EAREAQAGKKRKRKRRAGRPEDLE) are disordered. The span at 1869-1878 (GKKRKRKRRA) shows a compositional bias: basic residues. A helical transmembrane segment spans residues 1953 to 1973 (RRYWRILVLLLLALITIFLLL). The Cytoplasmic segment spans residues 1974–1992 (VFYTIPGQISEVIFSPVHK).

The cofactor is Ca(2+).

It localises to the membrane. In Mus musculus (Mouse), this protein is Fer-1-like protein 4 (Fer1l4).